The sequence spans 942 residues: Endoprotease bli-4 (942 aa).

An N-terminal signal peptide occupies residues 1–22 (MRISIGRIAWQILAVLIAVAFT). A propeptide spanning residues 23–116 (IEHDSICDES…EQRPKKRVKR (94 aa)) is cleaved from the precursor. Topologically, residues 117–871 (DYILLDNDVH…TLLIDSNKSS (755 aa)) are lumenal. Ca(2+) is bound at residue aspartate 124. Positions 130 to 160 (PFRRSVLNRDGTRRAQRQQPQSPREIPSLPF) are disordered. The Peptidase S8 domain maps to 168 to 483 (QWYLHGGAVG…YGLIDGGALV (316 aa)). Asparagine 195 is a glycosylation site (N-linked (GlcNAc...) asparagine). Aspartate 202 acts as the Charge relay system in catalysis. Aspartate 203 serves as a coordination point for substrate. 4 residues coordinate Ca(2+): aspartate 211, aspartate 223, aspartate 228, and aspartate 230. The segment at 211 to 242 (DLAANYDPLASTDINDHDDDPTPQNNGDNKHG) is disordered. 238–239 (DN) lines the substrate pocket. The active-site Charge relay system is histidine 241. Leucine 252, asparagine 255, glutamine 257, and glycine 259 together coordinate Ca(2+). Intrachain disulfides connect cysteine 258-cysteine 407 and cysteine 350-cysteine 380. Substrate is bound by residues glutamate 283, 300 to 305 (SWGPED), aspartate 311, and 339 to 342 (ASGN). Aspartate 305 contacts Ca(2+). Aspartate 348 provides a ligand contact to Ca(2+). Positions 353 and 355 each coordinate substrate. Glutamate 378 contacts Ca(2+). The active-site Charge relay system is serine 415. Serine 415 provides a ligand contact to substrate. In terms of domain architecture, P/Homo B spans 491 to 629 (TVPEQHICTY…TLLLYGTADP (139 aa)). Cysteine 498 and cysteine 527 are joined by a disulfide. A glycan (N-linked (GlcNAc...) asparagine) is linked at asparagine 519. FU repeat units lie at residues 674-723 (NCHD…YYLD), 725-777 (DKCK…LVAD), and 804-850 (GKCD…STKS). N-linked (GlcNAc...) asparagine glycosylation is present at asparagine 868. The helical transmembrane segment at 872-892 (GFGLMFWIVVSLIAACGICAC) threads the bilayer. Over 893–942 (KKCASETKSSNVEYAPLAQYNATNGAINLGAHTDDEDDDEDEVFVNPQIV) the chain is Cytoplasmic. A disordered region spans residues 922-942 (GAHTDDEDDDEDEVFVNPQIV). Residues 926–935 (DDEDDDEDEV) are compositionally biased toward acidic residues.

It belongs to the peptidase S8 family. Furin subfamily. Ca(2+) serves as cofactor. In terms of tissue distribution, in larvae and adults, expressed in all hypodermal cells, vulva and ventral nerve cords. Most highly expressed isoform in the embryonic epidermis. As to expression, expressed primarily in the germline. In terms of tissue distribution, expressed primarily in pharyngeal epithelial cells.

The protein localises to the membrane. Serine endoprotease which cleaves proproteins at paired basic amino acids at the consensus RX(K/R)R motif. Involved in N-terminal processing of cuticle collagens and plays a role in cuticle biosynthesis. May cleave both sqt-3 and dpy-17 collagens to promote their secretion. Acts in ASEL sensory neurons to regulate high salt chemotaxis responses probably by cleaving insulin-like protein ins-6 into its mature and active form. Essential for embryonic and larval development. Its function is as follows. Involved in cuticle biosynthesis but dispensable for larval development. This chain is Endoprotease bli-4 (bli-4), found in Caenorhabditis elegans.